The following is a 669-amino-acid chain: Epithelial sodium channel subunit gamma (669 aa).

Topologically, residues 1–67 (MAPPYHGDTR…VVSRGRLRKF (67 aa)) are cytoplasmic. The chain crosses the membrane as a helical span at residues 68–88 (IWILLTLSAVGLILWQCAELI). At 89–551 (MSYYTASVSV…VILLSNFGGQ (463 aa)) the chain is on the extracellular side. 8 disulfides stabilise this stretch: cysteine 113/cysteine 300, cysteine 223/cysteine 231, cysteine 277/cysteine 284, cysteine 389/cysteine 474, cysteine 411/cysteine 470, cysteine 415/cysteine 466, cysteine 424/cysteine 451, and cysteine 426/cysteine 440. A helical transmembrane segment spans residues 552 to 572 (LGLWMSCSMVCVIEIIEVFFI). Topologically, residues 573–669 (DSFSIVMRRR…LPDTLEGRSH (97 aa)) are cytoplasmic. The tract at residues 592-619 (DRKAPRPQEPPQVNAPAKEGHDNPVCTD) is disordered.

This sequence belongs to the amiloride-sensitive sodium channel (TC 1.A.6) family. SCNN1G subfamily. In terms of assembly, component of the heterotrimeric epithelial sodium channel (ENaC) composed of an alpha/SCNN1A, a beta/SCNN1B and a gamma/SCNN1G subunit.

Its subcellular location is the apical cell membrane. It catalyses the reaction Na(+)(in) = Na(+)(out). With respect to regulation, originally identified and characterized by its inhibition by the diuretic drug amiloride. Its function is as follows. This is one of the three pore-forming subunits of the heterotrimeric epithelial sodium channel (ENaC), a critical regulator of sodium balance and fluid homeostasis. ENaC operates in epithelial tissues, where it mediates the electrodiffusion of sodium ions from extracellular fluid through the apical membrane of cells, with water following osmotically. This chain is Epithelial sodium channel subunit gamma, found in Pelodiscus sinensis (Chinese softshell turtle).